Consider the following 131-residue polypeptide: uncharacterized protein (131 aa).

Residues 13–32 (TYSPLPEPPPTPALGGQRGP) are disordered.

This is an uncharacterized protein from Homo sapiens (Human).